The primary structure comprises 5400 residues: Midasin (5400 aa).

AAA-ATPase protomer regions lie at residues 345-571, 656-986, 1050-1308, 1347-1652, 1769-2023, and 2074-2347; these read MVSL…HGLP, LLEK…AIKA, SYVK…EKVV, SMRR…VNMA, VLRV…VLRI, and IRQN…MMGP. ATP is bound by residues 360-367, 674-681, 1079-1086, 1369-1376, 1786-1793, and 2095-2102; these read GPSGSGKS, GETGTGKT, GPTSSGKT, GDTGGGKT, GSPGVGKT, and GPSSSGKT. The interval 2435 to 4569 is linker; the sequence is IYLSSLGVTD…DGVGAKDVSD (2135 aa). 3 coiled-coil regions span residues 2896-2916, 3233-3253, and 3896-3916; these read LERL…SEID, AMKI…LELN, and MEQL…VLKL. Disordered stretches follow at residues 4540–4890, 4905–4929, and 4990–5069; these read EEDD…SSSN, TLTD…TKVN, and QVNT…RMDS. Residues 4576 to 4612 are compositionally biased toward basic and acidic residues; it reads QLHGTDKKEEEEKEQDDVLGKNKGIEMSDEFDGKEYS. Residues 4613 to 4631 are compositionally biased toward acidic residues; that stretch reads VSEDEEEDKEDEGSEDEPL. Basic and acidic residues-rich tracts occupy residues 4641 to 4652 and 4661 to 4687; these read DAEKADEKPWNK and MNEK…KDDG. Composition is skewed to acidic residues over residues 4688–4698 and 4706–4721; these read VETADEPEESN and GNDE…DTDN. The span at 4722–4732 shows a compositional bias: basic and acidic residues; it reads LEEKIQTKEEA. Over residues 4740–4750 the composition is skewed to acidic residues; the sequence is VDNEQIDDDME. Residues 4751-4762 are compositionally biased toward basic and acidic residues; that stretch reads MDKTEEVEKEDA. Positions 4779 to 4798 are enriched in acidic residues; it reads GENDQEETQEPSEENMEAEA. The span at 4799–4810 shows a compositional bias: basic and acidic residues; sequence EDRCGSPQKEEP. The span at 4811–4822 shows a compositional bias: acidic residues; the sequence is GNDLEQEPETEP. Residues 4823–4834 are compositionally biased toward basic and acidic residues; the sequence is IEGKEVMSEDMM. 4 stretches are compositionally biased toward polar residues: residues 4839–4855, 4864–4874, 4916–4928, and 5030–5040; these read RNDN…NPHG, TAPQENLSATD, PQNQ…QTKV, and SKPSISNSIAE. The Nuclear localization signal signature appears at 5157-5164; the sequence is MKKVIPYI. A VWFA domain is found at 5186 to 5387; it reads QVVIAVDDSR…EALPRTLGDV (202 aa). Residues 5271 to 5291 adopt a coiled-coil conformation; that stretch reads VVNLLRNMNEMLENLASTRRQ.

This sequence belongs to the midasin family. As to quaternary structure, associates with pre-60S ribosomes in the nucleoplasm. Constitutively and ubiquitously expressed. Mostly observed in the shoot apex and root tip, and, to a lower extent, in mature seeds, seedling (excluding the hypocotyl), roots, stems, leaves and flowers.

The protein resides in the nucleus. It localises to the nucleolus. The protein localises to the nucleoplasm. Nuclear chaperone required for maturation and nuclear export of pre-60S ribosome subunits. Functions at successive maturation steps to remove ribosomal factors at critical transition points, first driving the exit of early pre-60S particles from the nucleolus and then driving late pre-60S particles from the nucleus. Required for female gametophyte development. Involved in the expression regulation of genes related to plant growth and development. The polypeptide is Midasin (Arabidopsis thaliana (Mouse-ear cress)).